Here is a 287-residue protein sequence, read N- to C-terminus: Ribonuclease Z (287 aa).

Zn(2+) is bound by residues His-64, His-66, Asp-68, His-69, His-124, Asp-191, and His-250. The active-site Proton acceptor is the Asp-68.

This sequence belongs to the RNase Z family. Homodimer. Zn(2+) is required as a cofactor.

It carries out the reaction Endonucleolytic cleavage of RNA, removing extra 3' nucleotides from tRNA precursor, generating 3' termini of tRNAs. A 3'-hydroxy group is left at the tRNA terminus and a 5'-phosphoryl group is left at the trailer molecule.. In terms of biological role, zinc phosphodiesterase, which displays some tRNA 3'-processing endonuclease activity. Probably involved in tRNA maturation, by removing a 3'-trailer from precursor tRNA. The protein is Ribonuclease Z of Pyrobaculum aerophilum (strain ATCC 51768 / DSM 7523 / JCM 9630 / CIP 104966 / NBRC 100827 / IM2).